The sequence spans 102 residues: MDALKPWHLYLLLCRNGSYYAGITNDLERRFQAHLRGTGARYTRANPPVQMLASHPYPDRASASRAECALKRLPRARKLAWLQAQPRTVHESQPADASITRV.

Residues 5-80 (KPWHLYLLLC…KRLPRARKLA (76 aa)) enclose the GIY-YIG domain.

The protein belongs to the UPF0213 family.

This Xanthomonas axonopodis pv. citri (strain 306) protein is UPF0213 protein XAC3202.